Consider the following 179-residue polypeptide: Large ribosomal subunit protein uL5 (179 aa).

It belongs to the universal ribosomal protein uL5 family. Part of the 50S ribosomal subunit; part of the 5S rRNA/L5/L18/L25 subcomplex. Contacts the 5S rRNA and the P site tRNA. Forms a bridge to the 30S subunit in the 70S ribosome.

Its function is as follows. This is one of the proteins that bind and probably mediate the attachment of the 5S RNA into the large ribosomal subunit, where it forms part of the central protuberance. In the 70S ribosome it contacts protein S13 of the 30S subunit (bridge B1b), connecting the 2 subunits; this bridge is implicated in subunit movement. Contacts the P site tRNA; the 5S rRNA and some of its associated proteins might help stabilize positioning of ribosome-bound tRNAs. The chain is Large ribosomal subunit protein uL5 from Vibrio parahaemolyticus serotype O3:K6 (strain RIMD 2210633).